We begin with the raw amino-acid sequence, 67 residues long: Large ribosomal subunit protein bL35 (67 aa).

This sequence belongs to the bacterial ribosomal protein bL35 family.

This chain is Large ribosomal subunit protein bL35, found in Sinorhizobium fredii (strain NBRC 101917 / NGR234).